Here is a 530-residue protein sequence, read N- to C-terminus: Light-harvesting complex I LH38 proteins (530 aa).

The protein resides in the plastid. It is found in the chloroplast. This Euglena gracilis protein is Light-harvesting complex I LH38 proteins.